A 213-amino-acid polypeptide reads, in one-letter code: BAG family molecular chaperone regulator 6, mitochondrial (213 aa).

The region spanning 53–82 (DDAAAARIQAAFRGHLVRRHAAAVRGADDE) is the IQ domain. The BAG domain maps to 75-152 (AVRGADDEAT…GLQEVFDAVL (78 aa)).

As to quaternary structure, interacts with CAM1-1 under normal conditions. Dissociation of the interaction when calcium-CAM1-1 binding increases under saline-alkaline stress.

Its subcellular location is the mitochondrion. Its function is as follows. Co-chaperone that regulates stress responses. Acts as a negative regulator of saline-alkaline stress tolerance. May participate in stress response through regulating the homeostasis of iron, manganese and zinc ions. This is BAG family molecular chaperone regulator 6, mitochondrial from Oryza sativa subsp. japonica (Rice).